The primary structure comprises 452 residues: MNFSAVILAAGKGTRMYSNKPKVLHTLAGKPMAKHVIDTCEGLGAQNIHLVYGHGGDQMKAELGEERVQWVLQAEQLGTGHAVNQAAPEFADDEKVLVLYGDVPLISAETVENLLDAQPTGGIALLTVVLDNPMGYGRIIRRNGPVIAIVEQKDATEEQKLIKEINTGVMVATGGDLKRWLAALKNENAQGEYYLTDIIAAAHDEGRAVEAVHPVSPIEVEGVNDRAQLARLERAYQAAQAQKLLEQGVMLRDPSRFDLRGTLQCGMDIEIDANVIIEGNVTLGDNVVIGAGCVLKDCEIDDNTVLRPYSVIEGATVGEECTVGPFTRLRPGAELCNDAHVGNFVEVKNVRLGEGSKANHLTYLGDAEIGKRVNVGAGVITCNYDGANKFKTIIGDDVFVGSDSQLIAPVTVANGATVGAGSTVTKDVNENELYISRAKERRIANWQRPTKK.

A pyrophosphorylase region spans residues 1–226 (MNFSAVILAA…PIEVEGVNDR (226 aa)). Residues 8-11 (LAAG), lysine 22, glutamine 73, 78-79 (GT), 100-102 (YGD), glycine 137, glutamate 151, asparagine 166, and asparagine 224 each bind UDP-N-acetyl-alpha-D-glucosamine. Aspartate 102 contacts Mg(2+). Asparagine 224 serves as a coordination point for Mg(2+). A linker region spans residues 227-247 (AQLARLERAYQAAQAQKLLEQ). An N-acetyltransferase region spans residues 248 to 452 (GVMLRDPSRF…IANWQRPTKK (205 aa)). 2 residues coordinate UDP-N-acetyl-alpha-D-glucosamine: arginine 330 and lysine 348. The active-site Proton acceptor is histidine 360. 2 residues coordinate UDP-N-acetyl-alpha-D-glucosamine: tyrosine 363 and asparagine 374. Residues alanine 377, 383-384 (NY), serine 402, alanine 420, and arginine 437 contribute to the acetyl-CoA site.

In the N-terminal section; belongs to the N-acetylglucosamine-1-phosphate uridyltransferase family. It in the C-terminal section; belongs to the transferase hexapeptide repeat family. Homotrimer. It depends on Mg(2+) as a cofactor.

The protein localises to the cytoplasm. It catalyses the reaction alpha-D-glucosamine 1-phosphate + acetyl-CoA = N-acetyl-alpha-D-glucosamine 1-phosphate + CoA + H(+). The enzyme catalyses N-acetyl-alpha-D-glucosamine 1-phosphate + UTP + H(+) = UDP-N-acetyl-alpha-D-glucosamine + diphosphate. It functions in the pathway nucleotide-sugar biosynthesis; UDP-N-acetyl-alpha-D-glucosamine biosynthesis; N-acetyl-alpha-D-glucosamine 1-phosphate from alpha-D-glucosamine 6-phosphate (route II): step 2/2. It participates in nucleotide-sugar biosynthesis; UDP-N-acetyl-alpha-D-glucosamine biosynthesis; UDP-N-acetyl-alpha-D-glucosamine from N-acetyl-alpha-D-glucosamine 1-phosphate: step 1/1. Its pathway is bacterial outer membrane biogenesis; LPS lipid A biosynthesis. Catalyzes the last two sequential reactions in the de novo biosynthetic pathway for UDP-N-acetylglucosamine (UDP-GlcNAc). The C-terminal domain catalyzes the transfer of acetyl group from acetyl coenzyme A to glucosamine-1-phosphate (GlcN-1-P) to produce N-acetylglucosamine-1-phosphate (GlcNAc-1-P), which is converted into UDP-GlcNAc by the transfer of uridine 5-monophosphate (from uridine 5-triphosphate), a reaction catalyzed by the N-terminal domain. This is Bifunctional protein GlmU from Aliivibrio fischeri (strain MJ11) (Vibrio fischeri).